The primary structure comprises 992 residues: Translation initiation factor IF-2 (992 aa).

Disordered regions lie at residues 154-173 (RRLR…EREA) and 338-399 (AAPG…RPES). The tr-type G domain occupies 492–661 (PRAPVVTVMG…LLQAEVLELK (170 aa)). The segment at 501–508 (GHVDHGKT) is G1. 501–508 (GHVDHGKT) lines the GTP pocket. Positions 526–530 (GITQH) are G2. A G3 region spans residues 547–550 (DTPG). Residues 547–551 (DTPGH) and 601–604 (NKID) contribute to the GTP site. The segment at 601-604 (NKID) is G4. Residues 637-639 (SAH) are G5.

It belongs to the TRAFAC class translation factor GTPase superfamily. Classic translation factor GTPase family. IF-2 subfamily.

Its subcellular location is the cytoplasm. One of the essential components for the initiation of protein synthesis. Protects formylmethionyl-tRNA from spontaneous hydrolysis and promotes its binding to the 30S ribosomal subunits. Also involved in the hydrolysis of GTP during the formation of the 70S ribosomal complex. The polypeptide is Translation initiation factor IF-2 (Polaromonas naphthalenivorans (strain CJ2)).